The primary structure comprises 410 residues: Arginine deiminase (410 aa).

The active-site Amidino-cysteine intermediate is cysteine 400.

This sequence belongs to the arginine deiminase family.

It localises to the cytoplasm. The enzyme catalyses L-arginine + H2O = L-citrulline + NH4(+). Its pathway is amino-acid degradation; L-arginine degradation via ADI pathway; carbamoyl phosphate from L-arginine: step 1/2. The chain is Arginine deiminase from Bacillus cytotoxicus (strain DSM 22905 / CIP 110041 / 391-98 / NVH 391-98).